The following is a 476-amino-acid chain: Proline--tRNA ligase 2 (476 aa).

It belongs to the class-II aminoacyl-tRNA synthetase family. ProS type 3 subfamily. In terms of assembly, homodimer.

Its subcellular location is the cytoplasm. It catalyses the reaction tRNA(Pro) + L-proline + ATP = L-prolyl-tRNA(Pro) + AMP + diphosphate. Its function is as follows. Catalyzes the attachment of proline to tRNA(Pro) in a two-step reaction: proline is first activated by ATP to form Pro-AMP and then transferred to the acceptor end of tRNA(Pro). The sequence is that of Proline--tRNA ligase 2 from Bacillus cereus (strain ATCC 14579 / DSM 31 / CCUG 7414 / JCM 2152 / NBRC 15305 / NCIMB 9373 / NCTC 2599 / NRRL B-3711).